The sequence spans 77 residues: UPF0349 protein lmo2392 (77 aa).

The protein belongs to the UPF0349 family.

This Listeria monocytogenes serovar 1/2a (strain ATCC BAA-679 / EGD-e) protein is UPF0349 protein lmo2392.